The chain runs to 140 residues: Nucleoside diphosphate kinase (140 aa).

ATP contacts are provided by K11, F59, R87, T93, R104, and N114. H117 functions as the Pros-phosphohistidine intermediate in the catalytic mechanism.

The protein belongs to the NDK family. As to quaternary structure, homotetramer. Mg(2+) serves as cofactor.

It is found in the cytoplasm. It carries out the reaction a 2'-deoxyribonucleoside 5'-diphosphate + ATP = a 2'-deoxyribonucleoside 5'-triphosphate + ADP. It catalyses the reaction a ribonucleoside 5'-diphosphate + ATP = a ribonucleoside 5'-triphosphate + ADP. In terms of biological role, major role in the synthesis of nucleoside triphosphates other than ATP. The ATP gamma phosphate is transferred to the NDP beta phosphate via a ping-pong mechanism, using a phosphorylated active-site intermediate. The chain is Nucleoside diphosphate kinase from Cereibacter sphaeroides (strain ATCC 17025 / ATH 2.4.3) (Rhodobacter sphaeroides).